Here is a 314-residue protein sequence, read N- to C-terminus: uncharacterized protein (314 aa).

The disordered stretch occupies residues 1-71 (MAGNSQRRGA…QRAGRKADET (71 aa)). Residues G266, I286, and L295 each contribute to the S-adenosyl-L-methionine site.

It belongs to the class IV-like SAM-binding methyltransferase superfamily. RNA methyltransferase TrmH family.

This is an uncharacterized protein from Mycolicibacterium smegmatis (strain ATCC 700084 / mc(2)155) (Mycobacterium smegmatis).